Reading from the N-terminus, the 92-residue chain is Small ribosomal subunit protein uS19c (92 aa).

Belongs to the universal ribosomal protein uS19 family.

It localises to the plastid. It is found in the cyanelle. In terms of biological role, protein S19 forms a complex with S13 that binds strongly to the 16S ribosomal RNA. This is Small ribosomal subunit protein uS19c (rps19) from Cyanophora paradoxa.